Here is a 205-residue protein sequence, read N- to C-terminus: Guanylate kinase (205 aa).

A Guanylate kinase-like domain is found at 5–184; that stretch reads GLLIVLSGPS…AVQKIKGIVE (180 aa). 12–19 contributes to the ATP binding site; the sequence is GPSGVGKG.

The protein belongs to the guanylate kinase family.

Its subcellular location is the cytoplasm. It carries out the reaction GMP + ATP = GDP + ADP. Essential for recycling GMP and indirectly, cGMP. This is Guanylate kinase from Listeria monocytogenes serotype 4b (strain F2365).